The sequence spans 198 residues: NAD(P)H dehydrogenase (quinone) (198 aa).

The region spanning 4 to 189 (ILVLYYSMYG…SIARYQGEYV (186 aa)) is the Flavodoxin-like domain. FMN is bound by residues 10–15 (SMYGHI) and 78–80 (TRF). NAD(+) is bound at residue Tyr12. Trp98 is a binding site for substrate. FMN contacts are provided by residues 113–118 (STGTGG) and His133.

It belongs to the WrbA family. FMN serves as cofactor.

The catalysed reaction is a quinone + NADH + H(+) = a quinol + NAD(+). It carries out the reaction a quinone + NADPH + H(+) = a quinol + NADP(+). In Salmonella agona (strain SL483), this protein is NAD(P)H dehydrogenase (quinone).